Here is a 291-residue protein sequence, read N- to C-terminus: Protein SpdB (291 aa).

Transmembrane regions (helical) follow at residues 24 to 44 (VVVI…LVVG), 71 to 91 (ITGV…AHAL), and 99 to 119 (WLAV…HGLW).

The protein resides in the cell membrane. In terms of biological role, involved in plasmid transfer. This Streptomyces lividans protein is Protein SpdB (spdB).